A 229-amino-acid polypeptide reads, in one-letter code: Lipoprotein-releasing system ATP-binding protein LolD (229 aa).

Positions 6–229 (LELDAIERTY…DGHLTPYVPA (224 aa)) constitute an ABC transporter domain. 42-49 (GPSGSGKS) provides a ligand contact to ATP.

The protein belongs to the ABC transporter superfamily. Lipoprotein translocase (TC 3.A.1.125) family. The complex is composed of two ATP-binding proteins (LolD) and two transmembrane proteins (LolC and LolE).

It is found in the cell inner membrane. Part of the ABC transporter complex LolCDE involved in the translocation of mature outer membrane-directed lipoproteins, from the inner membrane to the periplasmic chaperone, LolA. Responsible for the formation of the LolA-lipoprotein complex in an ATP-dependent manner. This is Lipoprotein-releasing system ATP-binding protein LolD from Maricaulis maris (strain MCS10) (Caulobacter maris).